We begin with the raw amino-acid sequence, 380 residues long: Cytochrome b (380 aa).

A run of 4 helical transmembrane segments spans residues 33 to 53 (FGSLLGLCLIIQILTGLFLAM), 77 to 98 (WLIRYMHANGASMFFICLFLHV), 113 to 133 (WNMGIILLFAVMATAFMGYVL), and 178 to 198 (FFAFHFILPFIITALVLVHLL). Positions 83 and 97 each coordinate heme b. Heme b is bound by residues H182 and H196. H201 contributes to the a ubiquinone binding site. A run of 4 helical transmembrane segments spans residues 226–246 (IKDFLGVLVLLMAFMILVLFF), 288–308 (LGGVLALILSILILALMPLLH), 320–340 (ITQTMYWILVADLLILTWIGG), and 347–367 (FIMIGQAASIAYFAIIVIFMP).

It belongs to the cytochrome b family. In terms of assembly, the cytochrome bc1 complex contains 11 subunits: 3 respiratory subunits (MT-CYB, CYC1 and UQCRFS1), 2 core proteins (UQCRC1 and UQCRC2) and 6 low-molecular weight proteins (UQCRH/QCR6, UQCRB/QCR7, UQCRQ/QCR8, UQCR10/QCR9, UQCR11/QCR10 and a cleavage product of UQCRFS1). This cytochrome bc1 complex then forms a dimer. Requires heme b as cofactor.

The protein resides in the mitochondrion inner membrane. Its function is as follows. Component of the ubiquinol-cytochrome c reductase complex (complex III or cytochrome b-c1 complex) that is part of the mitochondrial respiratory chain. The b-c1 complex mediates electron transfer from ubiquinol to cytochrome c. Contributes to the generation of a proton gradient across the mitochondrial membrane that is then used for ATP synthesis. This Chionomys roberti (Robert's snow vole) protein is Cytochrome b (MT-CYB).